The primary structure comprises 493 residues: Glycerol kinase (493 aa).

Thr-13 provides a ligand contact to ADP. Residues Thr-13, Thr-14, and Ser-15 each contribute to the ATP site. Thr-13 provides a ligand contact to sn-glycerol 3-phosphate. Arg-17 is a binding site for ADP. Positions 83, 84, 135, and 244 each coordinate sn-glycerol 3-phosphate. Residues Arg-83, Glu-84, Tyr-135, Asp-244, and Gln-245 each coordinate glycerol. Positions 266 and 309 each coordinate ADP. Residues Thr-266, Gly-309, Gln-313, and Gly-410 each contribute to the ATP site. Residues Gly-410 and Asn-414 each contribute to the ADP site.

The protein belongs to the FGGY kinase family.

The enzyme catalyses glycerol + ATP = sn-glycerol 3-phosphate + ADP + H(+). It participates in polyol metabolism; glycerol degradation via glycerol kinase pathway; sn-glycerol 3-phosphate from glycerol: step 1/1. With respect to regulation, inhibited by fructose 1,6-bisphosphate (FBP). Key enzyme in the regulation of glycerol uptake and metabolism. Catalyzes the phosphorylation of glycerol to yield sn-glycerol 3-phosphate. This chain is Glycerol kinase, found in Shewanella halifaxensis (strain HAW-EB4).